The following is a 367-amino-acid chain: Ribosome-binding ATPase YchF (367 aa).

One can recognise an OBG-type G domain in the interval 2–258 (LSAGIVGLPN…LKLEQRQYFL (257 aa)). 11 to 16 (NVGKST) lines the ATP pocket. The Mg(2+) site is built by Ser15 and Thr35. Residues 281 to 364 (NLWSFFTFGK…KDGDVCNFKF (84 aa)) form the TGS domain.

Belongs to the TRAFAC class OBG-HflX-like GTPase superfamily. OBG GTPase family. YchF/OLA1 subfamily. Mg(2+) serves as cofactor.

ATPase that binds to both the 70S ribosome and the 50S ribosomal subunit in a nucleotide-independent manner. The sequence is that of Ribosome-binding ATPase YchF from Mycoplasma genitalium (strain ATCC 33530 / DSM 19775 / NCTC 10195 / G37) (Mycoplasmoides genitalium).